The following is a 291-amino-acid chain: Aspartate carbamoyltransferase catalytic subunit (291 aa).

Carbamoyl phosphate is bound by residues R47 and T48. K75 serves as a coordination point for L-aspartate. Residues R97, H126, and Q129 each coordinate carbamoyl phosphate. The L-aspartate site is built by R159 and R213. Residues G251 and P252 each contribute to the carbamoyl phosphate site.

Belongs to the aspartate/ornithine carbamoyltransferase superfamily. ATCase family. As to quaternary structure, heterododecamer (2C3:3R2) of six catalytic PyrB chains organized as two trimers (C3), and six regulatory PyrI chains organized as three dimers (R2).

The enzyme catalyses carbamoyl phosphate + L-aspartate = N-carbamoyl-L-aspartate + phosphate + H(+). The protein operates within pyrimidine metabolism; UMP biosynthesis via de novo pathway; (S)-dihydroorotate from bicarbonate: step 2/3. In terms of biological role, catalyzes the condensation of carbamoyl phosphate and aspartate to form carbamoyl aspartate and inorganic phosphate, the committed step in the de novo pyrimidine nucleotide biosynthesis pathway. This is Aspartate carbamoyltransferase catalytic subunit from Aquifex aeolicus (strain VF5).